The sequence spans 686 residues: 3',5'-cyclic-AMP phosphodiesterase 4C (686 aa).

4 positions are modified to phosphoserine: Ser9, Ser28, Ser40, and Ser83. Disordered regions lie at residues 88-116 and 124-143; these read NGLP…VHHV and YRSD…TSSA. The segment covering 124–133 has biased composition (basic and acidic residues); it reads YRSDSDHEPS. One can recognise a PDEase domain in the interval 313–642; the sequence is VQTDQEEQLA…EWYQSRIPCS (330 aa). The active-site Proton donor is His389. His389 provides a ligand contact to 3',5'-cyclic AMP. AMP-binding residues include His389 and His393. Zn(2+) contacts are provided by His393, His429, Asp430, and Asp547. Asp430, Asp547, Gln598, and Phe601 together coordinate AMP. Residue Asp430 coordinates Mg(2+). Asp430 serves as a coordination point for Mn(2+). 3',5'-cyclic AMP contacts are provided by Gln598 and Phe601. Ser642 carries the phosphoserine modification. Over residues 660-671 the composition is skewed to acidic residues; the sequence is EAEEEEEEEDEG. Residues 660-686 are disordered; the sequence is EAEEEEEEEDEGQCTALNRESSELPST. Polar residues predominate over residues 674–686; the sequence is TALNRESSELPST.

Belongs to the cyclic nucleotide phosphodiesterase family. PDE4 subfamily. Part of a complex containing AKAP5, ADCY5, ADCY6 and PKD2. Zn(2+) is required as a cofactor. Requires Mg(2+) as cofactor. It depends on Mn(2+) as a cofactor.

The protein resides in the cell projection. The protein localises to the cilium. It carries out the reaction 3',5'-cyclic AMP + H2O = AMP + H(+). Its pathway is purine metabolism; 3',5'-cyclic AMP degradation; AMP from 3',5'-cyclic AMP: step 1/1. Hydrolyzes the second messenger cAMP, which is a key regulator of many important physiological processes. The sequence is that of 3',5'-cyclic-AMP phosphodiesterase 4C from Mus musculus (Mouse).